The chain runs to 543 residues: Plant intracellular Ras-group-related LRR protein 5 (543 aa).

LRR repeat units lie at residues 239-262, 264-284, 285-307, 309-331, 332-354, 356-377, 378-400, 402-424, 426-448, and 449-470; these read LQDV…IGSL, YLTK…AFGE, LSNL…SFGN, TSLA…LGKL, ANLR…IGSC, SLVE…IGKL, EKLE…VGSL, RLRE…CFAT, LVKL…IGNL, and EMLE…SFRC. The stretch at 472 to 494 is one LRR 11; degenerate repeat; that stretch reads SRLRVFHADETPLEFPPREVVKL. The short motif at 495 to 502 is the GVYW; degenerate element; the sequence is GAQAVVKY.

Belongs to the SHOC2 family. In terms of tissue distribution, widely expressed.

Leucine-rich repeat protein that likely mediates protein interactions, possibly in the context of signal transduction. This is Plant intracellular Ras-group-related LRR protein 5 (IRL5) from Oryza sativa subsp. japonica (Rice).